Consider the following 143-residue polypeptide: Transcriptional regulator MraZ (143 aa).

SpoVT-AbrB domains are found at residues 5–47 (EYNH…SMDE) and 76–119 (ATEC…SSDQ).

Belongs to the MraZ family. As to quaternary structure, forms oligomers.

Its subcellular location is the cytoplasm. It is found in the nucleoid. This Alkaliphilus metalliredigens (strain QYMF) protein is Transcriptional regulator MraZ.